The chain runs to 782 residues: Cleavage and polyadenylation specificity factor subunit 2 (782 aa).

The segment covering 407-416 (KKLEQSKEAD) has biased composition (basic and acidic residues). The segment at 407-449 (KKLEQSKEADIDSSDESDIEEDIDQPSAHKTKHDLMMKGEGSR) is disordered. Acidic residues predominate over residues 417–430 (IDSSDESDIEEDID). Serine 419, serine 420, and serine 423 each carry phosphoserine. Residues 439-449 (HDLMMKGEGSR) show a composition bias toward basic and acidic residues. Serine 660 carries the phosphoserine modification.

Belongs to the metallo-beta-lactamase superfamily. RNA-metabolizing metallo-beta-lactamase-like family. CPSF2/YSH1 subfamily. In terms of assembly, component of the cleavage and polyadenylation specificity factor (CPSF) complex, composed of CPSF1, CPSF2, CPSF3, CPSF4 and FIP1L1. Interacts with CPSF3, CSTF2 and SYMPK. Interacts with ZC3H3.

The protein localises to the nucleus. In terms of biological role, component of the cleavage and polyadenylation specificity factor (CPSF) complex that play a key role in pre-mRNA 3'-end formation, recognizing the AAUAAA signal sequence and interacting with poly(A) polymerase and other factors to bring about cleavage and poly(A) addition. Involved in the histone 3' end pre-mRNA processing. The sequence is that of Cleavage and polyadenylation specificity factor subunit 2 (CPSF2) from Homo sapiens (Human).